The following is a 140-amino-acid chain: Nucleoside diphosphate kinase (140 aa).

ATP is bound by residues Lys11, Phe59, Arg87, Thr93, Arg104, and Asn114. The Pros-phosphohistidine intermediate role is filled by His117.

Belongs to the NDK family. Homotetramer. It depends on Mg(2+) as a cofactor.

The protein resides in the cytoplasm. The enzyme catalyses a 2'-deoxyribonucleoside 5'-diphosphate + ATP = a 2'-deoxyribonucleoside 5'-triphosphate + ADP. The catalysed reaction is a ribonucleoside 5'-diphosphate + ATP = a ribonucleoside 5'-triphosphate + ADP. In terms of biological role, major role in the synthesis of nucleoside triphosphates other than ATP. The ATP gamma phosphate is transferred to the NDP beta phosphate via a ping-pong mechanism, using a phosphorylated active-site intermediate. The chain is Nucleoside diphosphate kinase from Rickettsia canadensis (strain McKiel).